The following is a 508-amino-acid chain: Phytepsin (508 aa).

The N-terminal stretch at 1–27 (MGTRGLALALLAAVLLLQTVLPAASEA) is a signal peptide. Residues 28 to 66 (EGLVRIALKKRPIDRNSRVATGLSGGEEQPLLSGANPLR) constitute a propeptide, activation peptide. The Peptidase A1 domain maps to 84–505 (YFGEIGVGTP…DYGKLRIGFA (422 aa)). Residue Asp102 is part of the active site. 2 cysteine pairs are disulfide-bonded: Cys115-Cys121 and Cys280-Cys284. The active site involves Asp289. Residues 314-419 (VVSQECKTIV…NQLCNRLPSP (106 aa)) form the Saposin B-type domain. 4 disulfide bridges follow: Cys319-Cys413, Cys344-Cys385, Cys350-Cys382, and Cys427-Cys464. Residue Asn399 is glycosylated (N-linked (GlcNAc...) asparagine).

Belongs to the peptidase A1 family. As to quaternary structure, heterodimer of two subunits (29 kDa and 11 kDa) processed from the precursor molecule. A large enzyme (32 kDa and 16 kDa) is an intermediate precursor form. Embryo and leaf.

It localises to the vacuole. The enzyme catalyses Prefers hydrophobic residues Phe, Val, Ile, Leu, and Ala at P1 and P1', but also cleaves -Phe-|-Asp- and -Asp-|-Asp- bonds in 2S albumin from plant seeds.. Functionally, involved in the breakdown of propeptides of storage proteins in protein-storage vacuoles. The protein is Phytepsin of Hordeum vulgare (Barley).